A 196-amino-acid polypeptide reads, in one-letter code: Small ribosomal subunit protein uS4c (196 aa).

Positions 15–36 are disordered; sequence LGTLPGLTSKRPRSGSDLKNPL. The region spanning 89–150 is the S4 RNA-binding domain; sequence MRLDNILFRL…KQRSKALIQN (62 aa).

It belongs to the universal ribosomal protein uS4 family. Part of the 30S ribosomal subunit. Contacts protein S5. The interaction surface between S4 and S5 is involved in control of translational fidelity.

Its subcellular location is the plastid. The protein resides in the chloroplast. Functionally, one of the primary rRNA binding proteins, it binds directly to 16S rRNA where it nucleates assembly of the body of the 30S subunit. With S5 and S12 plays an important role in translational accuracy. In Yucca filamentosa (Bear-grass), this protein is Small ribosomal subunit protein uS4c (rps4).